A 185-amino-acid chain; its full sequence is Ribosome-recycling factor (185 aa).

Belongs to the RRF family.

It localises to the cytoplasm. Functionally, responsible for the release of ribosomes from messenger RNA at the termination of protein biosynthesis. May increase the efficiency of translation by recycling ribosomes from one round of translation to another. The chain is Ribosome-recycling factor from Neorickettsia sennetsu (strain ATCC VR-367 / Miyayama) (Ehrlichia sennetsu).